Reading from the N-terminus, the 333-residue chain is Transcription initiation factor IIB (333 aa).

The TFIIB-type zinc-finger motif lies at 33 to 64 (EVYRCPICGNDKFIYNYERGEVVCIVCGAVVQ). Zn(2+)-binding residues include Cys37, Cys40, Cys56, and Cys59. Tandem repeats lie at residues 149-232 (QELE…LREL) and 243-324 (LYIS…ELAK).

The protein belongs to the TFIIB family.

In terms of biological role, stabilizes TBP binding to an archaeal box-A promoter. Also responsible for recruiting RNA polymerase II to the pre-initiation complex (DNA-TBP-TFIIB). The polypeptide is Transcription initiation factor IIB (Pyrobaculum neutrophilum (strain DSM 2338 / JCM 9278 / NBRC 100436 / V24Sta) (Thermoproteus neutrophilus)).